A 367-amino-acid chain; its full sequence is Dual specificity protein phosphatase 1 (367 aa).

The Rhodanese domain maps to 20–137 (RAAQCLLLDC…FSASCPELCS (118 aa)). One can recognise a Tyrosine-protein phosphatase domain in the interval 173–314 (GPVEILPFLY…LLQFESQVLA (142 aa)). The Phosphocysteine intermediate role is filled by cysteine 258. Serine 359 and serine 364 each carry phosphoserine; by MAPK1 and MAPK3.

The protein belongs to the protein-tyrosine phosphatase family. Non-receptor class dual specificity subfamily. Phosphorylation at Ser-359 and Ser-364 by MAPK1/ERK2 and MAPK3/ERK1 reduces its rate of degradation. In terms of processing, 'Lys-48'-linked polyubiquitinated by NEURL3, leading to proteasomal degradation. In terms of tissue distribution, expressed at high levels in the lung, liver placenta and pancreas. Moderate levels seen in the heart and skeletal muscle. Lower levels found in the brain and kidney.

It is found in the nucleus. The catalysed reaction is O-phospho-L-tyrosyl-[protein] + H2O = L-tyrosyl-[protein] + phosphate. It carries out the reaction O-phospho-L-seryl-[protein] + H2O = L-seryl-[protein] + phosphate. The enzyme catalyses O-phospho-L-threonyl-[protein] + H2O = L-threonyl-[protein] + phosphate. Its function is as follows. Dual specificity phosphatase that dephosphorylates MAP kinase MAPK1/ERK2 on both 'Thr-183' and 'Tyr-185', regulating its activity during the meiotic cell cycle. This is Dual specificity protein phosphatase 1 from Homo sapiens (Human).